Consider the following 301-residue polypeptide: Fluoroquinolones export ATP-binding protein Rv2688c (301 aa).

Positions 18–246 (IRVRGLTFRY…RSRRRVRVEY (229 aa)) constitute an ABC transporter domain. 52–59 (GPSGAGKS) is an ATP binding site.

It belongs to the ABC transporter superfamily. In terms of assembly, the complex is composed of 2 ATP-binding proteins (Rv2688c) and 2 transmembrane proteins (Rv2686c and Rv2687c).

It localises to the cell membrane. Inhibited by reserpine and verapamil. In terms of biological role, part of the ABC transporter complex Rv2686c/Rv2687c/Rv2688c involved in fluoroquinolones export. Confers resistance to ciprofloxacin and, to a lesser extent, norfloxacin, moxifloxacin and sparfloxacin. Probably responsible for energy coupling to the transport system. The sequence is that of Fluoroquinolones export ATP-binding protein Rv2688c from Mycobacterium tuberculosis (strain ATCC 25618 / H37Rv).